Here is a 230-residue protein sequence, read N- to C-terminus: Cytochrome c oxidase subunit 2 (230 aa).

The Mitochondrial intermembrane segment spans residues 1–14; the sequence is MAHPTQLGFQDAAS. Residues 15–45 traverse the membrane as a helical segment; it reads PVMEELLHFHDHALMIVFLISTLVLYIIIAM. Residues 46–59 are Mitochondrial matrix-facing; that stretch reads VSTKLTNKYILDSQ. Residues 60–87 traverse the membrane as a helical segment; sequence EIEIVWTILPAVILVLIALPSLRILYLM. The Mitochondrial intermembrane segment spans residues 88–230; the sequence is DEINDPHLTI…NWSSLMLEDA (143 aa). Cu cation is bound by residues His161, Cys196, Glu198, Cys200, His204, and Met207. Residue Glu198 coordinates Mg(2+).

Belongs to the cytochrome c oxidase subunit 2 family. In terms of assembly, component of the cytochrome c oxidase (complex IV, CIV), a multisubunit enzyme composed of 14 subunits. The complex is composed of a catalytic core of 3 subunits MT-CO1, MT-CO2 and MT-CO3, encoded in the mitochondrial DNA, and 11 supernumerary subunits COX4I, COX5A, COX5B, COX6A, COX6B, COX6C, COX7A, COX7B, COX7C, COX8 and NDUFA4, which are encoded in the nuclear genome. The complex exists as a monomer or a dimer and forms supercomplexes (SCs) in the inner mitochondrial membrane with NADH-ubiquinone oxidoreductase (complex I, CI) and ubiquinol-cytochrome c oxidoreductase (cytochrome b-c1 complex, complex III, CIII), resulting in different assemblies (supercomplex SCI(1)III(2)IV(1) and megacomplex MCI(2)III(2)IV(2)). Found in a complex with TMEM177, COA6, COX18, COX20, SCO1 and SCO2. Interacts with TMEM177 in a COX20-dependent manner. Interacts with COX20. Interacts with COX16. Requires Cu cation as cofactor.

It is found in the mitochondrion inner membrane. It catalyses the reaction 4 Fe(II)-[cytochrome c] + O2 + 8 H(+)(in) = 4 Fe(III)-[cytochrome c] + 2 H2O + 4 H(+)(out). Component of the cytochrome c oxidase, the last enzyme in the mitochondrial electron transport chain which drives oxidative phosphorylation. The respiratory chain contains 3 multisubunit complexes succinate dehydrogenase (complex II, CII), ubiquinol-cytochrome c oxidoreductase (cytochrome b-c1 complex, complex III, CIII) and cytochrome c oxidase (complex IV, CIV), that cooperate to transfer electrons derived from NADH and succinate to molecular oxygen, creating an electrochemical gradient over the inner membrane that drives transmembrane transport and the ATP synthase. Cytochrome c oxidase is the component of the respiratory chain that catalyzes the reduction of oxygen to water. Electrons originating from reduced cytochrome c in the intermembrane space (IMS) are transferred via the dinuclear copper A center (CU(A)) of subunit 2 and heme A of subunit 1 to the active site in subunit 1, a binuclear center (BNC) formed by heme A3 and copper B (CU(B)). The BNC reduces molecular oxygen to 2 water molecules using 4 electrons from cytochrome c in the IMS and 4 protons from the mitochondrial matrix. The chain is Cytochrome c oxidase subunit 2 (mt-co2) from Carassius auratus (Goldfish).